Here is a 1144-residue protein sequence, read N- to C-terminus: Ribonucleoside-diphosphate reductase large subunit (1144 aa).

Residues 1-33 (MANRPAASALAGARSPSERQEPREPEVAPPGGD) form a disordered region. A compositionally biased stretch (basic and acidic residues) spans 16–26 (PSERQEPREPE). The RIP homotypic interaction motif (RHIM) motif lies at 55-75 (AYRISDSSFVQCGSNCSMIID). Positions 118–324 (SGPSATTSVG…TDPGYPVPLE (207 aa)) are disordered. A compositionally biased stretch (polar residues) spans 119–132 (GPSATTSVGTQTSG). Positions 141-159 (TPEPQGPQAVPPPPPPPFP) are enriched in pro residues. Positions 164-179 (CCARRDARGGAEKDVG) are enriched in basic and acidic residues. Acidic residues predominate over residues 192–204 (SETEDSDSSDEDT). Low complexity-rich tracts occupy residues 205–216 (GSGSETLSRSSS) and 279–305 (GSAT…DVAP). Substrate-binding positions include T573, 588–589 (SC), G619, 798–802 (NLCTE), and 975–979 (PTAAS). An intrachain disulfide couples C589 to C815. N798 (proton acceptor) is an active-site residue. Catalysis depends on C800, which acts as the Cysteine radical intermediate. E802 acts as the Proton acceptor in catalysis.

The protein belongs to the ribonucleoside diphosphate reductase large chain family. As to quaternary structure, heterotetramer composed of a homodimer of the large subunit (R1) and a homodimer of the small subunit (R2). Larger multisubunit protein complex are also active, composed of (R1)n(R2)n. May self-assemble (via RIP homotypic interaction motif/RHIM) into homomeric fibrillar amyloid structures. Interacts (via RHIM) with human RIPK1 (via RHIM). Interacts (via RHIM) with human RIPK3 (via RHIM). May interact (via RHIM) with human ZBP1 (via RHIM). Interacts (via C-terminus) with host CASP8.

It carries out the reaction a 2'-deoxyribonucleoside 5'-diphosphate + [thioredoxin]-disulfide + H2O = a ribonucleoside 5'-diphosphate + [thioredoxin]-dithiol. Its function is as follows. Ribonucleoside-diphosphate reductase holoenzyme that provides the precursors necessary for viral DNA synthesis. Allows virus growth in non-dividing cells, as well as reactivation from latency in infected hosts. Catalyzes the biosynthesis of deoxyribonucleotides from the corresponding ribonucleotides. The N-terminal region confers antiapoptotic activity in differentiated cells such as neurons and is important for viral reactivation to increase neural survivability. Prevents host necroptosis by targeting host RIPK1 and RIPK3, thereby hampering the formation of necroptotic RIPK1-RIPK3 complexes. May form hetero-amyloid structures with host proteins RIPK3 or ZBP1, thereby preventing RIPK3- and ZBP1-mediated necroptosis. In addition, inhibits extrinsic apoptosis by targeting host CASP8. The polypeptide is Ribonucleoside-diphosphate reductase large subunit (Homo sapiens (Human)).